Consider the following 520-residue polypeptide: METWSVEQVCSWLVEKNLGELVHRFQEEEVSGAALLALNDRMVQQLVKKIGHQAVLMDLIKKYKQNTQGLKSPENPKKAALVMQTEAARDYRDEESSSPARHGEQMPSFYPAENLDNGLIDQRVLKQRRNVKQILARSKALQWTKSYVLPEFPYDVKCMLAEQKCPDHSMRIRIIEFLQADMTKYLEGSLYPSTQQYNDVVNALLQAHPFLDEDGCGFFLWKRALKDRFKYVRRPIEDDEQVIRNKCKFGHRRGQTRKSLADIRFDEIKLVQIKEEAVCFDSELDEHIKWFQQEYVKTEKDWREIDKRMSQTLEIRRKMIGSRTPLKDILKLFPFLKCPYQMFREFQLLTRTDIYKKTRHILESYSENILTSFSVVDNPINIVLQEKMKHYTDEDMLKYMKMTATCLLLPDVFGDDPSLFVIMNEQVQVSTPVLEVKNPFNMEVCEFSLYLERERLTKVDDCVTALAALVAAFHVFRIECPRRLSQTFNFLETLIFDMHSPYFPSLKEKENEVGFQHPLT.

In terms of domain architecture, SAM spans 4 to 71 (WSVEQVCSWL…KYKQNTQGLK (68 aa)). The interval 85–114 (TEAARDYRDEESSSPARHGEQMPSFYPAEN) is disordered.

The sequence is that of Sterile alpha motif domain-containing protein 3 (SAMD3) from Homo sapiens (Human).